A 389-amino-acid chain; its full sequence is Chaperone protein DnaJ (389 aa).

Residues 5 to 79 (KRDYYEVLGI…RKLYDQFGHE (75 aa)) form the J domain. Residues 151 to 234 (GCNKTIKYER…CRSNKYTVTN (84 aa)) form a CR-type zinc finger. Zn(2+)-binding residues include Cys-164, Cys-167, Cys-182, Cys-185, Cys-208, Cys-211, Cys-222, and Cys-225. CXXCXGXG motif repeat units follow at residues 164-171 (CHSCNGFG), 182-189 (CKDCNGNG), 208-215 (CSTCNGQG), and 222-229 (CKTCRSNK).

It belongs to the DnaJ family. As to quaternary structure, homodimer. Zn(2+) serves as cofactor.

The protein resides in the cytoplasm. Its function is as follows. Participates actively in the response to hyperosmotic and heat shock by preventing the aggregation of stress-denatured proteins and by disaggregating proteins, also in an autonomous, DnaK-independent fashion. Unfolded proteins bind initially to DnaJ; upon interaction with the DnaJ-bound protein, DnaK hydrolyzes its bound ATP, resulting in the formation of a stable complex. GrpE releases ADP from DnaK; ATP binding to DnaK triggers the release of the substrate protein, thus completing the reaction cycle. Several rounds of ATP-dependent interactions between DnaJ, DnaK and GrpE are required for fully efficient folding. Also involved, together with DnaK and GrpE, in the DNA replication of plasmids through activation of initiation proteins. This chain is Chaperone protein DnaJ, found in Mycoplasma genitalium (strain ATCC 33530 / DSM 19775 / NCTC 10195 / G37) (Mycoplasmoides genitalium).